A 294-amino-acid polypeptide reads, in one-letter code: Signal peptidase I (294 aa).

The disordered stretch occupies residues 1–59 (MTETTDSPSERQPGPAEPELSSRDPDIAGQVFDAAPFDAAPDADSEGDSKAAKTDEPRP). Residues 1–66 (MTETTDSPSE…PRPAKRSTLR (66 aa)) are Cytoplasmic-facing. Basic and acidic residues predominate over residues 47-59 (GDSKAAKTDEPRP). A helical membrane pass occupies residues 67–87 (EFAVLAVIAVVLYYVMLTFVA). The Extracellular segment spans residues 88 to 294 (RPYLIPSESM…VRSVNPQQGR (207 aa)). Active-site residues include S96 and K174.

This sequence belongs to the peptidase S26 family.

It is found in the cell membrane. The catalysed reaction is Cleavage of hydrophobic, N-terminal signal or leader sequences from secreted and periplasmic proteins.. The sequence is that of Signal peptidase I (lepB) from Mycobacterium tuberculosis (strain CDC 1551 / Oshkosh).